We begin with the raw amino-acid sequence, 470 residues long: MCDKADNHIDVQPEGNLEVSSVSSTRLYRRRWVILLLFSSYSLCNAFQWIQYGIINNIFMKFYQVSSFAVDWLSMVYMLTYIPFIFPVTWLLERKGLRVVALLAASINCAGTWIKVASVQPSLFWVTMLGQFACSCAQVFILGMPSQVASVWFGSDEVSTACAIGVFGNQLGIAIGFLVPPVLVPNVEDMGELAEHISIMFYITAAVATLIFLLVVFVFQEKPETPPSLAQVALRNMPTGQHSYLASIARLMCNKPFILLLISYGLNVGSFYAVSTLLNRMIIEHYPGEEVNAGRIGLTLVVAGVVGSLICGVWLDKTKTYKQTTLSVYLLSFVGMLIYSFTLNLGHLWLVFLTSGVLGFFMTGYLPLGFEFAVELTYPESEGTSSGLLNCSAQVFGIAFTIIQGKIIDHFGTLAGNIFLCVFLLIGSIMTAFIKSDLRRQKANQETGGNADSSVHPQHGETLPVKEVKM.

Topologically, residues 1-23 are cytoplasmic; sequence MCDKADNHIDVQPEGNLEVSSVS. A helical transmembrane segment spans residues 24–48; it reads STRLYRRRWVILLLFSSYSLCNAFQ. 3 residues coordinate choline: Asn-45, Ala-46, and Trp-49. Over 49–66 the chain is Extracellular; that stretch reads WIQYGIINNIFMKFYQVS. A helical transmembrane segment spans residues 67–94; it reads SFAVDWLSMVYMLTYIPFIFPVTWLLER. Over 95-96 the chain is Cytoplasmic; sequence KG. A helical membrane pass occupies residues 97–116; sequence LRVVALLAASINCAGTWIKV. Over 117-123 the chain is Extracellular; the sequence is ASVQPSL. Residues 124 to 152 form a helical membrane-spanning segment; that stretch reads FWVTMLGQFACSCAQVFILGMPSQVASVW. Choline-binding residues include Gln-138 and Leu-142. The Cytoplasmic portion of the chain corresponds to 153–157; the sequence is FGSDE. Residues 158–183 form a helical membrane-spanning segment; sequence VSTACAIGVFGNQLGIAIGFLVPPVL. The Extracellular portion of the chain corresponds to 184–188; sequence VPNVE. A helical membrane pass occupies residues 189 to 218; it reads DMGELAEHISIMFYITAAVATLIFLLVVFV. Over 219 to 254 the chain is Cytoplasmic; it reads FQEKPETPPSLAQVALRNMPTGQHSYLASIARLMCN. The chain crosses the membrane as a helical span at residues 255–285; the sequence is KPFILLLISYGLNVGSFYAVSTLLNRMIIEH. Tyr-272 serves as a coordination point for choline. Over 286 to 289 the chain is Extracellular; the sequence is YPGE. The chain crosses the membrane as a helical span at residues 290–318; that stretch reads EVNAGRIGLTLVVAGVVGSLICGVWLDKT. The Cytoplasmic segment spans residues 319–320; it reads KT. Residues 321-343 form a helical membrane-spanning segment; that stretch reads YKQTTLSVYLLSFVGMLIYSFTL. Over 344-346 the chain is Extracellular; the sequence is NLG. A helical transmembrane segment spans residues 347 to 376; the sequence is HLWLVFLTSGVLGFFMTGYLPLGFEFAVEL. Over 377 to 384 the chain is Cytoplasmic; the sequence is TYPESEGT. The helical transmembrane segment at 385–410 threads the bilayer; it reads SSGLLNCSAQVFGIAFTIIQGKIIDH. Residue Gln-394 participates in choline binding. Residues 411–412 lie on the Extracellular side of the membrane; that stretch reads FG. The helical transmembrane segment at 413–435 threads the bilayer; sequence TLAGNIFLCVFLLIGSIMTAFIK. The Cytoplasmic segment spans residues 436-470; that stretch reads SDLRRQKANQETGGNADSSVHPQHGETLPVKEVKM. The segment covering 445 to 456 has biased composition (polar residues); the sequence is QETGGNADSSVH. The disordered stretch occupies residues 445-470; sequence QETGGNADSSVHPQHGETLPVKEVKM.

It belongs to the major facilitator superfamily. Feline leukemia virus subgroup C receptor (TC 2.A.1.28.1) family.

It localises to the cell membrane. Its subcellular location is the mitochondrion membrane. The protein localises to the endoplasmic reticulum membrane. The enzyme catalyses choline(out) = choline(in). It catalyses the reaction ethanolamine(in) = ethanolamine(out). The catalysed reaction is heme b(in) = heme b(out). Functionally, choline uniporter that specifically mediates choline uptake at the blood-brain-barrier. Responsible for the majority of choline uptake across the blood-brain-barrier from the circulation into the brain. Choline, a nutrient critical for brain development, is a precursor of phosphatidylcholine, as well as betaine. Also mediates transport of ethanolamine. Choline and ethanolamine transport is not coupled with proton transport and is exclusively driven by the choline gradient across the plasma membrane. Also acts as a heme b transporter. The polypeptide is Choline/ethanolamine transporter flvcr2a (Danio rerio (Zebrafish)).